We begin with the raw amino-acid sequence, 133 residues long: Profilin-2 (133 aa).

It belongs to the profilin family. Occurs in many kinds of cells as a complex with monomeric actin in a 1:1 ratio.

The protein localises to the cytoplasm. It is found in the cytoskeleton. Binds to actin and affects the structure of the cytoskeleton. At high concentrations, profilin prevents the polymerization of actin, whereas it enhances it at low concentrations. By binding to PIP2, it inhibits the formation of IP3 and DG. The sequence is that of Profilin-2 from Artemisia vulgaris (Mugwort).